Reading from the N-terminus, the 660-residue chain is MKQRSFLSILCFILLAFGVASVSAQTCIENRKYFTPNGTYDSNRRLILSSLPNNTASQDGFYYGSIGEEQDRVYALGMCIPRSTPSDCFNCIKGAAGWLIQDCVNQTDAYYWALDPTLCLVRYSNISFSGSAAFWEIEPQYLVLNTATIASDLTDFKNIWEDLTSRTITAASAARSTPSSSDNHYRVDFANLTKFQNIYALMQCTPDISSDECNNCLQRGVLEYQSCCGNNTGGYVMRPICFFRWQLFTFSKAFHNITLATPPKPPMNVPRPPSVGHGANTTDNDSRGVSAGIVVVITVPAVVIVLILVVLGFFICWRRKSLQRTEFESDSDVSTTNSLQYEFKTIEAATNKFSKSNKLGEGRFGEVYKGKFSNGTEVAVKRLSKVSGQDTKKFRNEAVLVSKIQHRNLARLLGFCLQGDGKFLIYEFVLNKSLDYFLFDPEKQGELDWTRRYKIIGGIAQGILHLHQDPQLTIIYRDFKASNILLDADMNPKISDFGMATVFGMEESRGNTNWIAETFVYMSPEYAVHGKFSMKSDVYSFGILILEIISGKKNSSLYQNDETTTAGNLVTYAWRLWRNGSQLKLLDSSIGRNYQSNEVTRCIHIALLCVQENPEDRPKLSTIVSMLTSNTISVPAPGIPGFFPQSRRELDPLSEGLESG.

Positions 1-24 are cleaved as a signal peptide; sequence MKQRSFLSILCFILLAFGVASVSA. Gnk2-homologous domains follow at residues 25–128 and 137–250; these read QTCI…NISF and IEPQ…LFTF. Residues 25 to 294 lie on the Extracellular side of the membrane; the sequence is QTCIENRKYF…DSRGVSAGIV (270 aa). N-linked (GlcNAc...) asparagine glycans are attached at residues asparagine 37, asparagine 53, asparagine 105, asparagine 125, asparagine 191, asparagine 230, and asparagine 256. The segment covering 264 to 273 has biased composition (pro residues); it reads KPPMNVPRPP. Residues 264-283 form a disordered region; that stretch reads KPPMNVPRPPSVGHGANTTD. Residues asparagine 280 and asparagine 284 are each glycosylated (N-linked (GlcNAc...) asparagine). The chain crosses the membrane as a helical span at residues 295 to 315; sequence VVITVPAVVIVLILVVLGFFI. Residues 316–660 lie on the Cytoplasmic side of the membrane; that stretch reads CWRRKSLQRT…DPLSEGLESG (345 aa). The region spanning 353-632 is the Protein kinase domain; the sequence is FSKSNKLGEG…IVSMLTSNTI (280 aa). ATP contacts are provided by residues 359–367 and lysine 381; that span reads LGEGRFGEV. Tyrosine 426 is modified (phosphotyrosine). Aspartate 478 (proton acceptor) is an active-site residue. Position 482 is a phosphoserine (serine 482). Threonine 518 bears the Phosphothreonine mark. Tyrosine 526 bears the Phosphotyrosine mark.

This sequence belongs to the protein kinase superfamily. Ser/Thr protein kinase family. CRK subfamily.

The protein localises to the membrane. The enzyme catalyses L-seryl-[protein] + ATP = O-phospho-L-seryl-[protein] + ADP + H(+). It catalyses the reaction L-threonyl-[protein] + ATP = O-phospho-L-threonyl-[protein] + ADP + H(+). This is Cysteine-rich receptor-like protein kinase 22 (CRK22) from Arabidopsis thaliana (Mouse-ear cress).